Here is a 68-residue protein sequence, read N- to C-terminus: MSAEERLIELEIRVAEQEKTIDELSSVLTEQWKTVDQLSKKLNALTNRFLELKEQAAPDVPVTKPPHW.

This sequence belongs to the SlyX family.

The polypeptide is Protein SlyX homolog (Brucella suis (strain ATCC 23445 / NCTC 10510)).